The chain runs to 294 residues: ATP synthase gamma chain (294 aa).

This sequence belongs to the ATPase gamma chain family. In terms of assembly, F-type ATPases have 2 components, CF(1) - the catalytic core - and CF(0) - the membrane proton channel. CF(1) has five subunits: alpha(3), beta(3), gamma(1), delta(1), epsilon(1). CF(0) has three main subunits: a, b and c.

It is found in the cell inner membrane. Its function is as follows. Produces ATP from ADP in the presence of a proton gradient across the membrane. The gamma chain is believed to be important in regulating ATPase activity and the flow of protons through the CF(0) complex. In Rhizorhabdus wittichii (strain DSM 6014 / CCUG 31198 / JCM 15750 / NBRC 105917 / EY 4224 / RW1) (Sphingomonas wittichii), this protein is ATP synthase gamma chain.